We begin with the raw amino-acid sequence, 64 residues long: Large ribosomal subunit protein bL35 (64 aa).

Basic residues predominate over residues 38-53 (KRKANLNAPKHVHHTN). Residues 38–64 (KRKANLNAPKHVHHTNAHSVMSLLCRA) form a disordered region.

It belongs to the bacterial ribosomal protein bL35 family.

In Helicobacter pylori (strain G27), this protein is Large ribosomal subunit protein bL35.